Consider the following 602-residue polypeptide: Peptide-N(4)-(N-acetyl-beta-glucosaminyl)asparagine amidase (602 aa).

The 129-residue stretch at 2–130 (PVREVSRLPE…EKKFLERFVG (129 aa)) folds into the Thioredoxin domain. Residues Cys-189, Cys-192, Cys-222, and Cys-225 each contribute to the Zn(2+) site. The active-site Nucleophile is the Cys-248. Catalysis depends on residues His-275 and Asp-292. A PAW domain is found at 400 to 602 (DMGGRTTGSK…ESMVVRVYMK (203 aa)).

This sequence belongs to the transglutaminase-like superfamily. PNGase family. Zn(2+) is required as a cofactor.

The protein localises to the cytoplasm. Its subcellular location is the endoplasmic reticulum. It carries out the reaction Hydrolysis of an N(4)-(acetyl-beta-D-glucosaminyl)asparagine residue in which the glucosamine residue may be further glycosylated, to yield a (substituted) N-acetyl-beta-D-glucosaminylamine and a peptide containing an aspartate residue.. Specifically deglycosylates the denatured form of N-linked glycoproteins in the cytoplasm and assists their proteasome-mediated degradation. Cleaves the beta-aspartyl-glucosamine (GlcNAc) of the glycan and the amide side chain of Asn, converting Asn to Asp. Prefers proteins containing high-mannose over those bearing complex type oligosaccharides. Can recognize misfolded proteins in the endoplasmic reticulum that are exported to the cytosol to be destroyed and deglycosylate them, while it has no activity toward native proteins. Deglycosylation is a prerequisite for subsequent proteasome-mediated degradation of some, but not all, misfolded glycoproteins. Also displays oxidoreductase (thioredoxin) activity. This Caenorhabditis briggsae protein is Peptide-N(4)-(N-acetyl-beta-glucosaminyl)asparagine amidase (png-1).